A 327-amino-acid polypeptide reads, in one-letter code: Acetyl-coenzyme A carboxylase carboxyl transferase subunit beta (327 aa).

Positions 24–293 (LWIKCPDTGQ…LTVTTAVEAP (270 aa)) constitute a CoA carboxyltransferase N-terminal domain. Low complexity predominate over residues 293–311 (PAEAAAKAEPEATTTEQPV). A disordered region spans residues 293 to 327 (PAEAAAKAEPEATTTEQPVAPAPTEPPAQPAAPQA). A compositionally biased stretch (pro residues) spans 312–327 (APAPTEPPAQPAAPQA).

It belongs to the AccD/PCCB family. As to quaternary structure, acetyl-CoA carboxylase is a heterohexamer composed of biotin carboxyl carrier protein (AccB), biotin carboxylase (AccC) and two subunits each of ACCase subunit alpha (AccA) and ACCase subunit beta (AccD).

The protein resides in the cytoplasm. It catalyses the reaction N(6)-carboxybiotinyl-L-lysyl-[protein] + acetyl-CoA = N(6)-biotinyl-L-lysyl-[protein] + malonyl-CoA. It functions in the pathway lipid metabolism; malonyl-CoA biosynthesis; malonyl-CoA from acetyl-CoA: step 1/1. Functionally, component of the acetyl coenzyme A carboxylase (ACC) complex. Biotin carboxylase (BC) catalyzes the carboxylation of biotin on its carrier protein (BCCP) and then the CO(2) group is transferred by the transcarboxylase to acetyl-CoA to form malonyl-CoA. The sequence is that of Acetyl-coenzyme A carboxylase carboxyl transferase subunit beta from Rhodopseudomonas palustris (strain TIE-1).